Consider the following 1333-residue polypeptide: NPC1-like intracellular cholesterol transporter 1 (1333 aa).

An N-terminal signal peptide occupies residues 1–20 (MAAAWQGWLLWALLLNSAQG). At 21–284 (ELYTPTHKAG…SFYMGRMPGW (264 aa)) the chain is on the extracellular side. Disulfide bonds link C32/C90, C38/C56, C77/C125, C91/C129, C113/C254, C116/C172, C189/C197, C243/C259, and C256/C263. Residues 285-305 (LALIIIFTAVFVLLSVVLVYL) form a helical membrane-spanning segment. The Cytoplasmic segment spans residues 306-352 (RVASNRNKNKTAGSQEAPNLPRKRRFSPHTVLGRFFESWGTRVASWP). A helical transmembrane segment spans residues 353-373 (LTVLALSFIVVIALSVGLTFI). The Extracellular segment spans residues 374–632 (ELTTDPVELW…DEINRTTIQD (259 aa)). Disulfide bonds link C471–C485 and C525–C542. The 166-residue stretch at 632–797 (DLPVFAISYL…MTAFVALLSL (166 aa)) folds into the SSD domain. A helical membrane pass occupies residues 633-653 (LPVFAISYLIVFLYISLALGS). Residues 654–665 (YSRWSRVAVDSK) are Cytoplasmic-facing. A helical membrane pass occupies residues 666-686 (ATLGLGGVAVVLGAVVAAMGF). Over 687–696 (YSYLGVPSSL) the chain is Extracellular. The chain crosses the membrane as a helical span at residues 697–717 (VIIQVVPFLVLAVGADNIFIF). At 718–742 (VLEYQRLPRMPGEQREAHIGRTLGS) the chain is on the cytoplasmic side. A helical membrane pass occupies residues 743–763 (VAPSMLLCSLSEAICFFLGAL). The Extracellular segment spans residues 764–776 (TSMPAVRTFALTS). Residues 777 to 797 (GLAIIFDFLLQMTAFVALLSL) form a helical membrane-spanning segment. Residues 798 to 846 (DSKRQEASRPDVVCCFSSRNLPPPKQKEGLLLCFFRKIYTPFLLHRFIR) lie on the Cytoplasmic side of the membrane. Residues 847 to 867 (PVVLLLFLVLFGANLYLMCNI) traverse the membrane as a helical segment. The Extracellular portion of the chain corresponds to 868 to 1113 (SVGLDQDLAL…QQYLTVLPEG (246 aa)). 3 disulfides stabilise this stretch: C920/C925, C967/C1025, and C981/C990. Residues 1114 to 1134 (IFTLALCFVPTFVVCYLLLGL) form a helical membrane-spanning segment. Residues 1135–1142 (DIRSGILN) lie on the Cytoplasmic side of the membrane. A helical membrane pass occupies residues 1143–1163 (LLSIIMILVDTIGLMAVWGIS). Residues 1164–1165 (YN) lie on the Extracellular side of the membrane. Residues 1166–1186 (AVSLINLVTAVGMSVEFVSHI) traverse the membrane as a helical segment. The Cytoplasmic segment spans residues 1187–1206 (TRSFAVSTKPTRLERAKDAT). A helical transmembrane segment spans residues 1207 to 1227 (IFMGSAVFAGVAMTNFPGILI). The Extracellular portion of the chain corresponds to 1228 to 1242 (LGFAQAQLIQIFFFR). Residues 1243-1263 (LNLLITLLGLLHGLVFLPVVL) traverse the membrane as a helical segment. Residues 1264-1333 (SYLGPDVNQA…SSLPKSDQKF (70 aa)) are Cytoplasmic-facing.

Belongs to the patched family. As to quaternary structure, interacts with RAB11A, MYO5B and RAB11FIP2. Interaction with RAB11A, MYO5B and RAB11FIP2 is required for proper transport to the plasma membrane upon cholesterol depletion. Interacts with NPC2. Interacts with LIMA1. Highly glycosylated. As to expression, expressed in small intestine, stomach and muscle, along with detectable expression in lung, heart, gall bladder, brain, testis, skin and liver. Expression in liver is extremely low.

The protein resides in the apical cell membrane. It localises to the cell membrane. It carries out the reaction cholesterol(in) = cholesterol(out). The catalysed reaction is sitosterol(out) = sitosterol(in). Functionally, plays a major role in cholesterol homeostasis. Critical for the uptake of cholesterol across the plasma membrane of the intestinal enterocyte. Involved in plant sterol absorption, it transports sitosterol, although at lower rates than cholesterol. May have a function in the transport of multiple lipids and their homeostasis, thereby influencing lipid metabolism regulation. May be involved in caveolin trafficking from the plasma membrane. Acts as a negative regulator of NPC2 and down-regulates its expression and secretion by inhibiting its maturation and accelerating its degradation. This is NPC1-like intracellular cholesterol transporter 1 from Mus musculus (Mouse).